Consider the following 363-residue polypeptide: Flagellar P-ring protein (363 aa).

An N-terminal signal peptide occupies residues 1-21 (MKTVINIFILFTFLASLSANA).

It belongs to the FlgI family. In terms of assembly, the basal body constitutes a major portion of the flagellar organelle and consists of four rings (L,P,S, and M) mounted on a central rod.

Its subcellular location is the periplasm. It is found in the bacterial flagellum basal body. Functionally, assembles around the rod to form the L-ring and probably protects the motor/basal body from shearing forces during rotation. This Colwellia psychrerythraea (strain 34H / ATCC BAA-681) (Vibrio psychroerythus) protein is Flagellar P-ring protein.